Here is a 374-residue protein sequence, read N- to C-terminus: Chaperone protein DnaJ (374 aa).

In terms of domain architecture, J spans 5–70; that stretch reads DYYEVLGVAK…QKRAAYDRYG (66 aa). A CR-type zinc finger spans residues 134-212; the sequence is GFDTEIRVPS…CDGVGRIRRN (79 aa). Zn(2+) contacts are provided by cysteine 147, cysteine 150, cysteine 164, cysteine 167, cysteine 186, cysteine 189, cysteine 200, and cysteine 203. CXXCXGXG motif repeat units follow at residues 147-154, 164-171, 186-193, and 200-207; these read CDTCHGSG, CRTCGGSG, CPTCHGTG, and CPSCDGVG.

It belongs to the DnaJ family. As to quaternary structure, homodimer. Zn(2+) is required as a cofactor.

It localises to the cytoplasm. In terms of biological role, participates actively in the response to hyperosmotic and heat shock by preventing the aggregation of stress-denatured proteins and by disaggregating proteins, also in an autonomous, DnaK-independent fashion. Unfolded proteins bind initially to DnaJ; upon interaction with the DnaJ-bound protein, DnaK hydrolyzes its bound ATP, resulting in the formation of a stable complex. GrpE releases ADP from DnaK; ATP binding to DnaK triggers the release of the substrate protein, thus completing the reaction cycle. Several rounds of ATP-dependent interactions between DnaJ, DnaK and GrpE are required for fully efficient folding. Also involved, together with DnaK and GrpE, in the DNA replication of plasmids through activation of initiation proteins. The chain is Chaperone protein DnaJ from Bordetella petrii (strain ATCC BAA-461 / DSM 12804 / CCUG 43448).